The chain runs to 197 residues: Glycerol-3-phosphate acyltransferase (197 aa).

Transmembrane regions (helical) follow at residues 5-25 (IYIAALLLGYLFGSIPFGLIL), 54-74 (GLAAATLLLDALKGTAAVIIA), 80-100 (AEAAMLAALGAFLGHLFPVWL), 112-132 (IGVLIGLFWPGAIVFCLLWLA), and 153-173 (IFLWWFGHPALASLFAVLTLL).

The protein belongs to the PlsY family. Probably interacts with PlsX.

It localises to the cell inner membrane. It carries out the reaction an acyl phosphate + sn-glycerol 3-phosphate = a 1-acyl-sn-glycero-3-phosphate + phosphate. The protein operates within lipid metabolism; phospholipid metabolism. In terms of biological role, catalyzes the transfer of an acyl group from acyl-phosphate (acyl-PO(4)) to glycerol-3-phosphate (G3P) to form lysophosphatidic acid (LPA). This enzyme utilizes acyl-phosphate as fatty acyl donor, but not acyl-CoA or acyl-ACP. The protein is Glycerol-3-phosphate acyltransferase of Rhodopseudomonas palustris (strain HaA2).